Consider the following 554-residue polypeptide: (Z)-gamma-bisabolene synthase 2 (554 aa).

4 residues coordinate Mg(2+): Asp-306, Asp-310, Asp-450, and Asp-458. A DDXXD motif motif is present at residues 306-310 (DDACD).

It belongs to the terpene synthase family. Tpsa subfamily. Requires Mg(2+) as cofactor. Mn(2+) is required as a cofactor. As to expression, predominantly expressed in roots. Expressed in the cortex and the sub-epidermal layers of roots. Also detected in leaf hydathodes and flower stigmata.

Its subcellular location is the cytoplasm. The catalysed reaction is (2E,6E)-farnesyl diphosphate = (Z)-gamma-bisabolene + diphosphate. It participates in secondary metabolite biosynthesis; terpenoid biosynthesis. Functionally, involved in sesquiterpene (C15) biosynthesis. The major product is (Z)-gamma-bisabolene with minor amounts of (E)-nerolidol and alpha-bisabolol. The polypeptide is (Z)-gamma-bisabolene synthase 2 (TPS13) (Arabidopsis thaliana (Mouse-ear cress)).